The chain runs to 86 residues: MAQKKGGGSTRNGRDSESKRLGVKVFGGEHINAGSIIIRQRGTRVHPGANVGIGKDHTLFALIDGQVEFGVKGALKKAQVSVLPRS.

Positions 1–10 are enriched in gly residues; sequence MAQKKGGGST. Residues 1–22 are disordered; the sequence is MAQKKGGGSTRNGRDSESKRLG.

Belongs to the bacterial ribosomal protein bL27 family.

The protein is Large ribosomal subunit protein bL27 of Polynucleobacter asymbioticus (strain DSM 18221 / CIP 109841 / QLW-P1DMWA-1) (Polynucleobacter necessarius subsp. asymbioticus).